We begin with the raw amino-acid sequence, 447 residues long: uncharacterized protein (447 aa).

The protein localises to the mitochondrion. This is an uncharacterized protein from Dictyostelium discoideum (Social amoeba).